The following is a 431-amino-acid chain: Phosphomethylpyrimidine synthase (431 aa).

Residues asparagine 66, methionine 95, tyrosine 124, histidine 163, 185-187 (SRG), 226-229 (DGLR), and glutamate 265 each bind substrate. Histidine 269 is a binding site for Zn(2+). Tyrosine 292 is a binding site for substrate. Zn(2+) is bound at residue histidine 333. Residues cysteine 408, cysteine 411, and cysteine 415 each contribute to the [4Fe-4S] cluster site.

This sequence belongs to the ThiC family. Requires [4Fe-4S] cluster as cofactor.

It carries out the reaction 5-amino-1-(5-phospho-beta-D-ribosyl)imidazole + S-adenosyl-L-methionine = 4-amino-2-methyl-5-(phosphooxymethyl)pyrimidine + CO + 5'-deoxyadenosine + formate + L-methionine + 3 H(+). It functions in the pathway cofactor biosynthesis; thiamine diphosphate biosynthesis. Catalyzes the synthesis of the hydroxymethylpyrimidine phosphate (HMP-P) moiety of thiamine from aminoimidazole ribotide (AIR) in a radical S-adenosyl-L-methionine (SAM)-dependent reaction. The polypeptide is Phosphomethylpyrimidine synthase (Dehalococcoides mccartyi (strain ATCC BAA-2100 / JCM 16839 / KCTC 5957 / BAV1)).